A 277-amino-acid chain; its full sequence is Nickel transport system permease protein NikC (277 aa).

Residues 1–12 (MNFFLSSRWSVR) lie on the Cytoplasmic side of the membrane. The helical transmembrane segment at 13-33 (LALIIIALLALIALTSQWWLP) threads the bilayer. Topologically, residues 34-78 (YDPQAIDLPSRLLSPDAQHWLGTDHLGRDIFSRLMAATRVSLGSV) are periplasmic. Positions 67–260 (LMAATRVSLG…ISVMAFNLVG (194 aa)) constitute an ABC transmembrane type-1 domain. A helical membrane pass occupies residues 79 to 99 (MACLLLVLTLGLVIGGSAGLI). Over 100-120 (GGRVDQATMRVADMFMTFPTS) the chain is Cytoplasmic. The chain crosses the membrane as a helical span at residues 121–141 (ILSFFMVGVLGTGLTNVIIAI). At 142-183 (ALSHWAWYARMVRSLVISLRQREFVLASRLSGAGHVRVFVDH) the chain is on the periplasmic side. Residues 184 to 204 (LAGAVIPSLLVLATLDIGHMM) form a helical membrane-spanning segment. The Cytoplasmic portion of the chain corresponds to 205–207 (LHV). A helical membrane pass occupies residues 208 to 228 (AGMSFLGLGVTAPTAEWGVMI). Residues 229–239 (NDARQYIWTQP) lie on the Periplasmic side of the membrane. The helical transmembrane segment at 240–260 (LQMFWPGLALFISVMAFNLVG) threads the bilayer. Topologically, residues 261 to 277 (DALRDHLDPHLVTEHAH) are cytoplasmic.

The protein belongs to the binding-protein-dependent transport system permease family. OppBC subfamily. As to quaternary structure, probably forms a heterodimeric pore with NikB.

Its subcellular location is the cell inner membrane. Involved in a nickel transport system, probably translocates nickel through the bacterial inner membrane. The sequence is that of Nickel transport system permease protein NikC (nikC) from Escherichia coli O157:H7.